A 100-amino-acid chain; its full sequence is Putative PIN1-like protein (100 aa).

Over residues 1–15 the composition is skewed to basic and acidic residues; that stretch reads MADEEKLPPGWEKRM. Disordered stretches follow at residues 1–52 and 69–100; these read MADE…QGEP and LDLA…REGL. One can recognise a WW domain in the interval 5 to 38; sequence EKLPPGWEKRMSRPSGRGYYFNHITNPSQWERPS. Residues 27 to 44 show a composition bias toward polar residues; the sequence is HITNPSQWERPSGNSSSG. The span at 87–100 shows a compositional bias: basic and acidic residues; the sequence is QRLHPEDQGRREGL.

The sequence is that of Putative PIN1-like protein (PIN1P1) from Homo sapiens (Human).